The following is a 326-amino-acid chain: tRNA-modifying protein YgfZ (326 aa).

Folate-binding residues include W27 and W189.

The protein belongs to the tRNA-modifying YgfZ family.

It localises to the cytoplasm. Functionally, folate-binding protein involved in regulating the level of ATP-DnaA and in the modification of some tRNAs. It is probably a key factor in regulatory networks that act via tRNA modification, such as initiation of chromosomal replication. This Salmonella paratyphi C (strain RKS4594) protein is tRNA-modifying protein YgfZ.